Here is a 303-residue protein sequence, read N- to C-terminus: Putative F-box protein At5g62060 (303 aa).

The F-box domain occupies 27–74 (KSRYIDIPLDITVEILKKLPAKSLVRFQCVSKQWSTIIGSRRDFIDSI).

The sequence is that of Putative F-box protein At5g62060 from Arabidopsis thaliana (Mouse-ear cress).